Here is a 494-residue protein sequence, read N- to C-terminus: Ketol-acid reductoisomerase (NADP(+)) (494 aa).

In terms of domain architecture, KARI N-terminal Rossmann spans Leu14–Ser208. Residues Cys45 to Gln48, Arg68, Arg76, Ser78, and Asp108 to Gln110 contribute to the NADP(+) site. Residue His132 is part of the active site. Gly158 serves as a coordination point for NADP(+). 2 consecutive KARI C-terminal knotted domains span residues Ser209 to Glu344 and Ser345 to Met487. The Mg(2+) site is built by Asp217, Glu221, Glu389, and Glu393. Substrate is bound at residue Ser414.

This sequence belongs to the ketol-acid reductoisomerase family. The cofactor is Mg(2+).

It catalyses the reaction (2R)-2,3-dihydroxy-3-methylbutanoate + NADP(+) = (2S)-2-acetolactate + NADPH + H(+). The enzyme catalyses (2R,3R)-2,3-dihydroxy-3-methylpentanoate + NADP(+) = (S)-2-ethyl-2-hydroxy-3-oxobutanoate + NADPH + H(+). It functions in the pathway amino-acid biosynthesis; L-isoleucine biosynthesis; L-isoleucine from 2-oxobutanoate: step 2/4. It participates in amino-acid biosynthesis; L-valine biosynthesis; L-valine from pyruvate: step 2/4. Involved in the biosynthesis of branched-chain amino acids (BCAA). Catalyzes an alkyl-migration followed by a ketol-acid reduction of (S)-2-acetolactate (S2AL) to yield (R)-2,3-dihydroxy-isovalerate. In the isomerase reaction, S2AL is rearranged via a Mg-dependent methyl migration to produce 3-hydroxy-3-methyl-2-ketobutyrate (HMKB). In the reductase reaction, this 2-ketoacid undergoes a metal-dependent reduction by NADPH to yield (R)-2,3-dihydroxy-isovalerate. The sequence is that of Ketol-acid reductoisomerase (NADP(+)) from Aliivibrio fischeri (strain ATCC 700601 / ES114) (Vibrio fischeri).